Reading from the N-terminus, the 147-residue chain is Myosin-ID light chain (147 aa).

EF-hand domains lie at 8–43 (EAQS…LGQN), 79–114 (FDEK…LGER), and 115–147 (LPEE…MLKK). Residues Asp-21, Asn-23, Asp-25, Lys-27, and Glu-32 each contribute to the Ca(2+) site.

As to quaternary structure, myosin I is a dimer of a heavy and a light chain. Inability to self-assemble into filaments. Interacts with myoD. Does not interact with myoB or myoC.

Its subcellular location is the cytoplasm. In terms of biological role, functions as the light chain for myosin-D. Has low affinity for calcium. This chain is Myosin-ID light chain (mlcD), found in Dictyostelium discoideum (Social amoeba).